A 309-amino-acid polypeptide reads, in one-letter code: tRNA pseudouridine synthase B (309 aa).

D39 serves as the catalytic Nucleophile.

This sequence belongs to the pseudouridine synthase TruB family. Type 1 subfamily.

The enzyme catalyses uridine(55) in tRNA = pseudouridine(55) in tRNA. Its function is as follows. Responsible for synthesis of pseudouridine from uracil-55 in the psi GC loop of transfer RNAs. The protein is tRNA pseudouridine synthase B of Bacillus velezensis (strain DSM 23117 / BGSC 10A6 / LMG 26770 / FZB42) (Bacillus amyloliquefaciens subsp. plantarum).